The following is a 118-amino-acid chain: Protein YoeF (118 aa).

This Escherichia coli (strain K12) protein is Protein YoeF (yoeF).